Here is a 311-residue protein sequence, read N- to C-terminus: Formimidoylglutamase (311 aa).

Residues His-122, Asp-151, His-153, Asp-155, Cys-242, and Asp-244 each coordinate Mn(2+).

It belongs to the arginase family. Homodimer. Mn(2+) serves as cofactor.

It catalyses the reaction N-formimidoyl-L-glutamate + H2O = formamide + L-glutamate. Its pathway is amino-acid degradation; L-histidine degradation into L-glutamate; L-glutamate from N-formimidoyl-L-glutamate (hydrolase route): step 1/1. Functionally, catalyzes the conversion of N-formimidoyl-L-glutamate to L-glutamate and formamide. This is Formimidoylglutamase from Pseudomonas aeruginosa (strain ATCC 15692 / DSM 22644 / CIP 104116 / JCM 14847 / LMG 12228 / 1C / PRS 101 / PAO1).